A 414-amino-acid chain; its full sequence is TnpB-like protein MJ1635 (414 aa).

Positions 329, 332, 346, and 349 each coordinate Zn(2+).

In the N-terminal section; belongs to the transposase 2 family. This sequence in the C-terminal section; belongs to the transposase 35 family.

In Methanocaldococcus jannaschii (strain ATCC 43067 / DSM 2661 / JAL-1 / JCM 10045 / NBRC 100440) (Methanococcus jannaschii), this protein is TnpB-like protein MJ1635.